Consider the following 645-residue polypeptide: Envelope glycoprotein (645 aa).

A signal peptide spans 1-33 (MESPAFSKPLKDKINPWGPLIIMGILVRAGASV). Residues 32–237 (SVQRDSPHQV…QVLNVGPRVP (206 aa)) are receptor-binding domain (RBD). At 34 to 585 (QRDSPHQVFN…FNRSPWFTTL (552 aa)) the chain is on the extracellular side. N-linked (GlcNAc...) asparagine; by host glycosylation is found at asparagine 43 and asparagine 58. Intrachain disulfides connect cysteine 113-cysteine 130 and cysteine 122-cysteine 135. The segment at 259-286 (PRPPRPPPSGAASMVPGAPPPSQQPGTG) is disordered. N-linked (GlcNAc...) asparagine; by host glycosylation occurs at asparagine 301. 6 disulfide bridges follow: cysteine 311-cysteine 314, cysteine 311-cysteine 538, cysteine 341-cysteine 395, cysteine 360-cysteine 372, cysteine 402-cysteine 415, and cysteine 530-cysteine 537. The CXXC signature appears at 311 to 314 (CWLC). 2 N-linked (GlcNAc...) asparagine; by host glycosylation sites follow: asparagine 333 and asparagine 340. N-linked (GlcNAc...) asparagine; by host glycosylation is found at asparagine 373 and asparagine 409. Residues 447–467 (VSLTLALLLGGLTMGGIAAGV) are fusion peptide. Positions 490–510 (DLGALEKSVSALEKSLTSLSE) form a coiled coil. An immunosuppression region spans residues 513-529 (LQNRRGLDLLFLKEGGL). Positions 530-538 (CAALKEECC) match the CX6CC motif. A helical membrane pass occupies residues 586 to 606 (ISTIMGPLIVLLLILLFGPCI). Residue cysteine 605 is the site of S-palmitoyl cysteine; by host attachment. At 607–640 (LNRLVQFVKDRISVVQALVLTQQYHQLKSIDPEE) the chain is on the cytoplasmic side. The YXXL motif; contains endocytosis signal motif lies at 630–633 (YHQL).

As to quaternary structure, the mature envelope protein (Env) consists of a trimer of SU-TM heterodimers attached by a labile interchain disulfide bond. The activated Env consists of SU monomers and TM trimers. In terms of processing, specific enzymatic cleavages in vivo yield mature proteins. Envelope glycoproteins are synthesized as an inactive precursor that is N-glycosylated and processed likely by host cell furin or by a furin-like protease in the Golgi to yield the mature SU and TM proteins. The cleavage site between SU and TM requires the minimal sequence [KR]-X-[KR]-R. The R-peptide is released from the C-terminus of the cytoplasmic tail of the TM protein upon particle formation as a result of proteolytic cleavage by the viral protease. Cleavage of this peptide is required for TM to become fusogenic. The CXXC motif is highly conserved across a broad range of retroviral envelope proteins. It is thought to participate in the formation of a labile disulfide bond possibly with the CX6CC motif present in the transmembrane protein. Isomerization of the intersubunit disulfide bond to an SU intrachain disulfide bond is thought to occur upon receptor recognition in order to allow membrane fusion. Post-translationally, the transmembrane protein is palmitoylated. In terms of processing, the R-peptide is palmitoylated.

The protein localises to the virion membrane. Its subcellular location is the host cell membrane. The surface protein (SU) attaches the virus to the host cell by binding to its receptor. This interaction activates a thiol in a CXXC motif of the C-terminal domain, where the other Cys residue participates in the formation of the intersubunit disulfide. The activated thiol will attack the disulfide and cause its isomerization into a disulfide isomer within the motif. This leads to SU displacement and TM refolding, and is thought to activate its fusogenic potential by unmasking its fusion peptide. Fusion occurs at the host cell plasma membrane. Functionally, the transmembrane protein (TM) acts as a class I viral fusion protein. Under the current model, the protein has at least 3 conformational states: pre-fusion native state, pre-hairpin intermediate state, and post-fusion hairpin state. During viral and target cell membrane fusion, the coiled coil regions (heptad repeats) assume a trimer-of-hairpins structure, positioning the fusion peptide in close proximity to the C-terminal region of the ectodomain. The formation of this structure appears to drive apposition and subsequent fusion of viral and target cell membranes. Membranes fusion leads to delivery of the nucleocapsid into the cytoplasm. The polypeptide is Envelope glycoprotein (env) (Xenotropic MuLV-related virus (isolate VP42) (XMRV)).